The chain runs to 254 residues: DNA-3-methyladenine glycosylase (254 aa).

Residues 1 to 10 are compositionally biased toward basic residues; that stretch reads MKTPARRSKR. Residues 1–20 form a disordered region; that stretch reads MKTPARRSKRVNQEESETNV.

This sequence belongs to the DNA glycosylase MPG family.

It localises to the nucleus. The enzyme catalyses Hydrolysis of alkylated DNA, releasing 3-methyladenine, 3-methylguanine, 7-methylguanine and 7-methyladenine.. Functionally, hydrolysis of the deoxyribose N-glycosidic bond to excise 3-methyladenine, and 7-methylguanine from the damaged DNA polymer formed by alkylation lesions. This Arabidopsis thaliana (Mouse-ear cress) protein is DNA-3-methyladenine glycosylase (MAG).